We begin with the raw amino-acid sequence, 441 residues long: Arginine biosynthesis bifunctional protein ArgJ, mitochondrial (441 aa).

Thr-178, Lys-204, Thr-215, Glu-304, Asn-436, and Ser-441 together coordinate substrate. Residue Thr-215 is the Nucleophile of the active site.

It belongs to the ArgJ family. In terms of assembly, heterodimer of an alpha and a beta chain. The alpha and beta chains are autoproteolytically processed from a single precursor protein within the mitochondrion.

It is found in the mitochondrion matrix. It carries out the reaction N(2)-acetyl-L-ornithine + L-glutamate = N-acetyl-L-glutamate + L-ornithine. The catalysed reaction is L-glutamate + acetyl-CoA = N-acetyl-L-glutamate + CoA + H(+). Its pathway is amino-acid biosynthesis; L-arginine biosynthesis; L-ornithine and N-acetyl-L-glutamate from L-glutamate and N(2)-acetyl-L-ornithine (cyclic): step 1/1. It functions in the pathway amino-acid biosynthesis; L-arginine biosynthesis; N(2)-acetyl-L-ornithine from L-glutamate: step 1/4. In terms of biological role, catalyzes two activities which are involved in the cyclic version of arginine biosynthesis: the synthesis of acetylglutamate from glutamate and acetyl-CoA, and of ornithine by transacetylation between acetylornithine and glutamate. The chain is Arginine biosynthesis bifunctional protein ArgJ, mitochondrial from Lodderomyces elongisporus (strain ATCC 11503 / CBS 2605 / JCM 1781 / NBRC 1676 / NRRL YB-4239) (Yeast).